A 146-amino-acid polypeptide reads, in one-letter code: Ubiquitin-conjugating enzyme E2 variant 1D (146 aa).

Positions Pro-13–Phe-146 constitute a UBC core domain.

The protein belongs to the ubiquitin-conjugating enzyme family. Heterodimer with UBC35 or UBC36. As to expression, expressed in roots, shoots, leaves, stems, flowers and pollen.

Functionally, has no ubiquitin ligase activity on its own. The heterodimer with UBC catalyzes the synthesis of non-canonical poly-ubiquitin chains that are linked through 'Lys-63'. This type of poly-ubiquitination does not lead to protein degradation by the proteasome. Mediates transcriptional activation of target genes. May play a role in the control of progress through the cell cycle and differentiation. Involved in the error-free DNA repair pathway and contributes to the survival of cells after DNA damage. The sequence is that of Ubiquitin-conjugating enzyme E2 variant 1D (UEV1D) from Arabidopsis thaliana (Mouse-ear cress).